Here is a 230-residue protein sequence, read N- to C-terminus: Demethylmenaquinone methyltransferase (230 aa).

Residues Thr57, Asp77, 101 to 102, and Ser118 each bind S-adenosyl-L-methionine; that span reads DI.

It belongs to the class I-like SAM-binding methyltransferase superfamily. MenG/UbiE family.

It carries out the reaction a 2-demethylmenaquinol + S-adenosyl-L-methionine = a menaquinol + S-adenosyl-L-homocysteine + H(+). It functions in the pathway quinol/quinone metabolism; menaquinone biosynthesis; menaquinol from 1,4-dihydroxy-2-naphthoate: step 2/2. Functionally, methyltransferase required for the conversion of demethylmenaquinol (DMKH2) to menaquinol (MKH2). This Chlamydia caviae (strain ATCC VR-813 / DSM 19441 / 03DC25 / GPIC) (Chlamydophila caviae) protein is Demethylmenaquinone methyltransferase.